A 1398-amino-acid chain; its full sequence is DNA-directed RNA polymerase subunit beta' (1398 aa).

Zn(2+) is bound by residues Cys-73, Cys-75, Cys-88, and Cys-91. Positions 464, 466, and 468 each coordinate Mg(2+). The Zn(2+) site is built by Cys-823, Cys-897, Cys-904, and Cys-907.

This sequence belongs to the RNA polymerase beta' chain family. As to quaternary structure, the RNAP catalytic core consists of 2 alpha, 1 beta, 1 beta' and 1 omega subunit. When a sigma factor is associated with the core the holoenzyme is formed, which can initiate transcription. Mg(2+) serves as cofactor. It depends on Zn(2+) as a cofactor.

It carries out the reaction RNA(n) + a ribonucleoside 5'-triphosphate = RNA(n+1) + diphosphate. Functionally, DNA-dependent RNA polymerase catalyzes the transcription of DNA into RNA using the four ribonucleoside triphosphates as substrates. The sequence is that of DNA-directed RNA polymerase subunit beta' from Gluconacetobacter diazotrophicus (strain ATCC 49037 / DSM 5601 / CCUG 37298 / CIP 103539 / LMG 7603 / PAl5).